The primary structure comprises 263 residues: 5'-nucleotidase SurE (263 aa).

A divalent metal cation is bound by residues Asp-8, Asp-9, Ser-40, and Asn-98.

It belongs to the SurE nucleotidase family. A divalent metal cation serves as cofactor.

The protein localises to the cytoplasm. The catalysed reaction is a ribonucleoside 5'-phosphate + H2O = a ribonucleoside + phosphate. Its function is as follows. Nucleotidase that shows phosphatase activity on nucleoside 5'-monophosphates. The protein is 5'-nucleotidase SurE of Gloeobacter violaceus (strain ATCC 29082 / PCC 7421).